The following is a 489-amino-acid chain: Squalene monooxygenase (489 aa).

Residues 10-30 (VTYDALIVGAGVIGPCVATAL) traverse the membrane as a helical segment. FAD contacts are provided by residues 21-22 (VI), 41-42 (ER), Arg49, Arg151, Val167, Asp328, and Met341. A run of 2 helical transmembrane segments spans residues 426 to 446 (FLAG…AVAF) and 464 to 484 (ALLE…PFLV).

It belongs to the squalene monooxygenase family. Requires FAD as cofactor.

It is found in the microsome membrane. Its subcellular location is the endoplasmic reticulum membrane. The enzyme catalyses squalene + reduced [NADPH--hemoprotein reductase] + O2 = (S)-2,3-epoxysqualene + oxidized [NADPH--hemoprotein reductase] + H2O + H(+). The protein operates within terpene metabolism; lanosterol biosynthesis; lanosterol from farnesyl diphosphate: step 2/3. Functionally, catalyzes the stereospecific oxidation of squalene to (S)-2,3-epoxysqualene, and is considered to be a rate-limiting enzyme in steroid biosynthesis. In Candida glabrata (strain ATCC 2001 / BCRC 20586 / JCM 3761 / NBRC 0622 / NRRL Y-65 / CBS 138) (Yeast), this protein is Squalene monooxygenase (ERG1).